Reading from the N-terminus, the 231-residue chain is Peroxisomal membrane protein 11E (231 aa).

Residues Met-1–Lys-91 are Cytoplasmic-facing. A helical transmembrane segment spans residues Asn-92–Gly-108. Topologically, residues Arg-109–Ser-202 are lumenal. Residues Pro-203–Leu-222 form a helical membrane-spanning segment. Residues Pro-223–Pro-231 lie on the Cytoplasmic side of the membrane.

Belongs to the peroxin-11 family. As to quaternary structure, homooligomer. Interacts with ARC5 and FIS1B on peroxisomes. In terms of tissue distribution, expressed in leaves and developing siliques.

The protein resides in the peroxisome membrane. Functionally, involved in peroxisomal proliferation. Promotes peroxisomal duplication, aggregation or elongation without fission. This is Peroxisomal membrane protein 11E (PEX11E) from Arabidopsis thaliana (Mouse-ear cress).